The chain runs to 242 residues: MGQKIHPLGFRLGVIKDHKSCWYADAKRYPELLQEDRRIRQYVEKNLANAGIADIRIERKADQVDISIHTARPGVVVGRGGTGIEQLRLGLQKALGGQRQIRINVIEVARVDADANLIAEYIAQQLERRVSFRRVVRQAIQRAQRAEVKGIKIQVSGRLNGAEIARTEWVREGRVPLHTLRADIDYSYKTASTIYGILGVKVWIFKGEIIPGQEEIAAAVPAQAPRRQQRRRQQFEDRSSEG.

Residues 39 to 109 (IRQYVEKNLA…QIRINVIEVA (71 aa)) enclose the KH type-2 domain. Positions 220-242 (VPAQAPRRQQRRRQQFEDRSSEG) are disordered. The segment covering 233–242 (QQFEDRSSEG) has biased composition (basic and acidic residues).

The protein belongs to the universal ribosomal protein uS3 family. Part of the 30S ribosomal subunit. Forms a tight complex with proteins S10 and S14.

Binds the lower part of the 30S subunit head. Binds mRNA in the 70S ribosome, positioning it for translation. The chain is Small ribosomal subunit protein uS3 from Microcystis aeruginosa (strain NIES-843 / IAM M-2473).